A 70-amino-acid polypeptide reads, in one-letter code: DNA-directed RNA polymerase subunit omega (70 aa).

Belongs to the RNA polymerase subunit omega family. In terms of assembly, the RNAP catalytic core consists of 2 alpha, 1 beta, 1 beta' and 1 omega subunit. When a sigma factor is associated with the core the holoenzyme is formed, which can initiate transcription.

The catalysed reaction is RNA(n) + a ribonucleoside 5'-triphosphate = RNA(n+1) + diphosphate. In terms of biological role, promotes RNA polymerase assembly. Latches the N- and C-terminal regions of the beta' subunit thereby facilitating its interaction with the beta and alpha subunits. The sequence is that of DNA-directed RNA polymerase subunit omega from Thermoanaerobacter pseudethanolicus (strain ATCC 33223 / 39E) (Clostridium thermohydrosulfuricum).